The chain runs to 314 residues: Mitotic checkpoint protein BUB3.3 (314 aa).

WD repeat units lie at residues 11–50, 52–90, 92–131, 134–173, 176–215, 229–269, and 272–311; these read PIED…LSLE, NSQA…VDTI, RHDD…SLVF, DAGG…QSYA, VEVP…SEIK, LDGV…RLNE, and RYSN…QVFI.

This sequence belongs to the WD repeat BUB3 family. In terms of assembly, part of the mitotic checkpoint complex (MCC).

Its subcellular location is the nucleus. It is found in the chromosome. The protein resides in the centromere. It localises to the kinetochore. The protein localises to the cytoplasm. Its subcellular location is the cytoskeleton. It is found in the phragmoplast. The protein resides in the spindle. In terms of biological role, has a dual function in spindle-assembly checkpoint signaling and in promoting the establishment of correct kinetochore-microtubule (K-MT) attachments. Promotes the formation of stable end-on bipolar attachments. Necessary for kinetochore localization of BUB1. The BUB1/BUB3 complex plays a role in the inhibition of anaphase-promoting complex or cyclosome (APC/C) when spindle-assembly checkpoint is activated and inhibits the ubiquitin ligase activity of APC/C by phosphorylating its activator CDC20. This Arabidopsis thaliana (Mouse-ear cress) protein is Mitotic checkpoint protein BUB3.3 (BUB3.3).